A 306-amino-acid polypeptide reads, in one-letter code: Aspartate carbamoyltransferase catalytic subunit (306 aa).

Positions 56 and 57 each coordinate carbamoyl phosphate. Residue Lys-84 coordinates L-aspartate. Residues Arg-106, His-136, and Gln-139 each contribute to the carbamoyl phosphate site. Arg-169 and Arg-221 together coordinate L-aspartate. Carbamoyl phosphate-binding residues include Ala-262 and Pro-263.

It belongs to the aspartate/ornithine carbamoyltransferase superfamily. ATCase family. In terms of assembly, heterododecamer (2C3:3R2) of six catalytic PyrB chains organized as two trimers (C3), and six regulatory PyrI chains organized as three dimers (R2).

The enzyme catalyses carbamoyl phosphate + L-aspartate = N-carbamoyl-L-aspartate + phosphate + H(+). The protein operates within pyrimidine metabolism; UMP biosynthesis via de novo pathway; (S)-dihydroorotate from bicarbonate: step 2/3. In terms of biological role, catalyzes the condensation of carbamoyl phosphate and aspartate to form carbamoyl aspartate and inorganic phosphate, the committed step in the de novo pyrimidine nucleotide biosynthesis pathway. The polypeptide is Aspartate carbamoyltransferase catalytic subunit (Streptococcus gordonii (strain Challis / ATCC 35105 / BCRC 15272 / CH1 / DL1 / V288)).